We begin with the raw amino-acid sequence, 177 residues long: UPF0114 protein HPP12_0190 (177 aa).

A run of 4 helical transmembrane segments spans residues 15 to 35 (WLLA…GYAF), 54 to 74 (LVLS…VLMV), 102 to 122 (FNAL…IFLL), and 145 to 165 (PIFW…LAAV).

Belongs to the UPF0114 family.

The protein localises to the cell membrane. The protein is UPF0114 protein HPP12_0190 of Helicobacter pylori (strain P12).